The sequence spans 789 residues: Probable 3-hydroxyacyl-CoA dehydrogenase (789 aa).

It belongs to the 3-hydroxyacyl-CoA dehydrogenase family.

The catalysed reaction is a (3S)-3-hydroxyacyl-CoA + NAD(+) = a 3-oxoacyl-CoA + NADH + H(+). It functions in the pathway lipid metabolism; fatty acid beta-oxidation. Functionally, involved in the degradation of long-chain fatty acids. The polypeptide is Probable 3-hydroxyacyl-CoA dehydrogenase (fadN) (Bacillus subtilis (strain 168)).